The following is a 459-amino-acid chain: Phosphoglucosamine mutase (459 aa).

S100 serves as the catalytic Phosphoserine intermediate. Residues S100, D256, D258, and D260 each coordinate Mg(2+). S100 carries the phosphoserine modification.

Belongs to the phosphohexose mutase family. The cofactor is Mg(2+). Post-translationally, activated by phosphorylation.

The catalysed reaction is alpha-D-glucosamine 1-phosphate = D-glucosamine 6-phosphate. Its function is as follows. Catalyzes the conversion of glucosamine-6-phosphate to glucosamine-1-phosphate. This Heliobacterium modesticaldum (strain ATCC 51547 / Ice1) protein is Phosphoglucosamine mutase.